The primary structure comprises 113 residues: Transmembrane protein 256 (113 aa).

A signal peptide spans 1-29; that stretch reads MAGPAAAFRRLGALSGAAALGFASYGAHG. The Extracellular portion of the chain corresponds to 30-63; sequence AQFPDAYGKELFDKANKHHFLHSLALLGVPHCRK. Lys43 carries the N6-acetyllysine modification. Residues 64-84 form a helical membrane-spanning segment; that stretch reads PLWAGLLLASGTTLFCTSFYY. At 85–92 the chain is on the cytoplasmic side; that stretch reads QALSGDPS. The helical transmembrane segment at 93-113 threads the bilayer; that stretch reads IQTLAPAGGTLLLLGWLALAL.

Belongs to the TMEM256 family.

Its subcellular location is the membrane. This Homo sapiens (Human) protein is Transmembrane protein 256 (TMEM256).